The following is a 426-amino-acid chain: MATIQALRGTKDIFAPEIAYWQQVEAVVRDCLGRAMYQEIRTPIFEQTSLFERGIGEATDVVSKEMYSFTDRGDRPITLRPEGTAGAVRAYIERKLFAQGGVQRLWYTGPMFRYERPQAGRQRQFHQVGVEVLGSADPRADVEVMAIATEILQKLGLKNLSLQLNSVGNGGDRQRYREALVDYLTPFKADLDADSQERLERNPLRILDSKDQKTQEIAQNAPSILDYLGDDSKKHFDQVQSSLTALGIDYVLNPCLVRGLDYYTHTAFEIQSSDLGAQATVCGGGRYDGLVAELGGPETPAVGWAIGLERLVILLQQLGEASGPQLDFYLVSKGEQAEAAAVILAHKLRFAGFSVELDLSGSAFGKQFKRADRSGAIACLVLGDEEAVNQQVQLKWLQTKAQETLAQADLLGNLESWRQKMQQAKH.

This sequence belongs to the class-II aminoacyl-tRNA synthetase family. As to quaternary structure, homodimer.

It is found in the cytoplasm. It catalyses the reaction tRNA(His) + L-histidine + ATP = L-histidyl-tRNA(His) + AMP + diphosphate + H(+). This chain is Histidine--tRNA ligase, found in Picosynechococcus sp. (strain ATCC 27264 / PCC 7002 / PR-6) (Agmenellum quadruplicatum).